A 198-amino-acid chain; its full sequence is Protein GrpE (198 aa).

This sequence belongs to the GrpE family. Homodimer.

The protein localises to the cytoplasm. Functionally, participates actively in the response to hyperosmotic and heat shock by preventing the aggregation of stress-denatured proteins, in association with DnaK and GrpE. It is the nucleotide exchange factor for DnaK and may function as a thermosensor. Unfolded proteins bind initially to DnaJ; upon interaction with the DnaJ-bound protein, DnaK hydrolyzes its bound ATP, resulting in the formation of a stable complex. GrpE releases ADP from DnaK; ATP binding to DnaK triggers the release of the substrate protein, thus completing the reaction cycle. Several rounds of ATP-dependent interactions between DnaJ, DnaK and GrpE are required for fully efficient folding. The protein is Protein GrpE of Baumannia cicadellinicola subsp. Homalodisca coagulata.